The following is a 128-amino-acid chain: Small ribosomal subunit protein uS12 (128 aa).

At Asp-89 the chain carries 3-methylthioaspartic acid.

It belongs to the universal ribosomal protein uS12 family. As to quaternary structure, part of the 30S ribosomal subunit. Contacts proteins S8 and S17. May interact with IF1 in the 30S initiation complex.

Functionally, with S4 and S5 plays an important role in translational accuracy. Its function is as follows. Interacts with and stabilizes bases of the 16S rRNA that are involved in tRNA selection in the A site and with the mRNA backbone. Located at the interface of the 30S and 50S subunits, it traverses the body of the 30S subunit contacting proteins on the other side and probably holding the rRNA structure together. The combined cluster of proteins S8, S12 and S17 appears to hold together the shoulder and platform of the 30S subunit. This chain is Small ribosomal subunit protein uS12, found in Campylobacter jejuni subsp. doylei (strain ATCC BAA-1458 / RM4099 / 269.97).